Reading from the N-terminus, the 108-residue chain is Small cysteine and glycine repeat-containing protein 8 (108 aa).

The tract at residues 4–84 is 12 X 2 AA repeats of CG; it reads CGCGGCGGGC…RRTCSSCGCG (81 aa).

Belongs to the KRTAP type 28 family.

In terms of biological role, in the hair cortex, hair keratin intermediate filaments are embedded in an interfilamentous matrix, consisting of hair keratin-associated proteins (KRTAP), which are essential for the formation of a rigid and resistant hair shaft through their extensive disulfide bond cross-linking with abundant cysteine residues of hair keratins. The matrix proteins include the high-sulfur and high-glycine-tyrosine keratins. The sequence is that of Small cysteine and glycine repeat-containing protein 8 from Homo sapiens (Human).